The chain runs to 337 residues: UPF0252 protein PH1321 (337 aa).

A helical membrane pass occupies residues 100-120 (IIGMLFLVFIILPAITSNLWS).

It belongs to the UPF0252 family.

The protein resides in the membrane. The sequence is that of UPF0252 protein PH1321 from Pyrococcus horikoshii (strain ATCC 700860 / DSM 12428 / JCM 9974 / NBRC 100139 / OT-3).